Consider the following 32-residue polypeptide: Trypsin inhibitor 2b (32 aa).

3 cysteine pairs are disulfide-bonded: Cys3/Cys20, Cys10/Cys22, and Cys16/Cys29.

It belongs to the protease inhibitor I7 (squash-type serine protease inhibitor) family.

The protein resides in the secreted. Functionally, inhibits trypsin. The chain is Trypsin inhibitor 2b from Cucumis sativus (Cucumber).